Consider the following 332-residue polypeptide: Adenosine receptor A2b (332 aa).

The Extracellular portion of the chain corresponds to 1-8; that stretch reads MQLETQDA. The chain crosses the membrane as a helical span at residues 9–33; the sequence is LYVALELVIAALAVAGNVLVCAAVG. Over 34–43 the chain is Cytoplasmic; sequence ASSALQTPTN. A helical membrane pass occupies residues 44–67; that stretch reads YFLVSLATADVAVGLFAIPFAITI. The Extracellular segment spans residues 68-78; it reads SLGFCTDFHGC. An intrachain disulfide couples C78 to C171. The helical transmembrane segment at 79–101 threads the bilayer; that stretch reads LFLACFVLVLTQSSIFSLLAVAV. The Cytoplasmic segment spans residues 102-121; the sequence is DRYLAIRVPLRYKGLVTGTR. Residues 122 to 144 form a helical membrane-spanning segment; sequence ARGIIAVLWVLAFGIGLTPFLGW. The Extracellular portion of the chain corresponds to 145-178; that stretch reads NSKDSATSNCTELGDGIANKSCCPVTCLFENVVP. Residues N153 and N163 are each glycosylated (N-linked (GlcNAc...) asparagine). E174 provides a ligand contact to adenosine. A helical transmembrane segment spans residues 179 to 203; the sequence is MSYMVYFNFFGCVLPPLLIMLVIYI. The Cytoplasmic portion of the chain corresponds to 204 to 235; sequence KIFMVACKQLQRMELMDHSRTTLQREIHAAKS. A helical transmembrane segment spans residues 236–259; that stretch reads LAMIVGIFALCWLPVHAINCITLF. Position 254 (N254) interacts with adenosine. Over 260 to 267 the chain is Extracellular; sequence HPALAKDK. A helical membrane pass occupies residues 268-291; it reads PKWVMNVAILLSHANSVVNPIVYA. Residues S279 and H280 each coordinate adenosine. The Cytoplasmic segment spans residues 292–332; that stretch reads YRNRDFRYSFHKIISRYVLCQAETKGGSGQAGAQSTLSLGL. A lipid anchor (S-palmitoyl cysteine) is attached at C311.

It belongs to the G-protein coupled receptor 1 family.

Its subcellular location is the cell membrane. In terms of biological role, receptor for adenosine. The activity of this receptor is mediated by G proteins which activate adenylyl cyclase. This chain is Adenosine receptor A2b (Adora2b), found in Mus musculus (Mouse).